Consider the following 548-residue polypeptide: Fluconazole resistance protein 1 (548 aa).

The interval 30–94 (SAREDETRKP…WNGPSDPENP (65 aa)) is disordered. Residues 31–51 (AREDETRKPENTDKKECKPDY) are compositionally biased toward basic and acidic residues. The segment covering 60–73 (SCSESSTDSDSSGS) has biased composition (low complexity). 12 helical membrane passes run 104 to 124 (LVVFQIMLLTCVTYMGSSIYT), 139 to 159 (VVATLNLSLYVLGYGLGPIIF), 179 to 199 (FFFMIFQVGCATVHNIGGLIV), 203 to 223 (ISGILCSPSLATGGGTVADII), 230 to 250 (LVLGMWSAGAVAAPVLAPLLG), 261 to 281 (FIFWLLMWLSAATFILLAFFF), 347 to 367 (IAVAYGCFYLFFEAFPIVFVG), 376 to 396 (VGLAYMGFCVGCVLAYGLFGI), 416 to 436 (FLIVAMCVCWCLPLSLFLFGW), 440 to 460 (VHWILPVISEVFFVLAVFNIF), 476 to 496 (ASVFAGNGFCRASFACAFPLF), and 511 to 531 (VAWGSSLVGFLTLGLAIIPFI).

This sequence belongs to the major facilitator superfamily.

It is found in the membrane. In terms of biological role, probable efflux transporter. Confers resistance to the azole derivative fluconazole (FCZ). The polypeptide is Fluconazole resistance protein 1 (FLR1) (Saccharomyces cerevisiae (strain ATCC 204508 / S288c) (Baker's yeast)).